The chain runs to 656 residues: L-type lectin-domain containing receptor kinase S.1 (656 aa).

Positions 1-29 (MSWQWRRRQWPSPLLLILIVLHLVSSSSA) are cleaved as a signal peptide. The interval 30–273 (IDFLYNSFSS…ARRILAWSLS (244 aa)) is legume-lectin like. The Extracellular segment spans residues 30 to 304 (IDFLYNSFSS…SSSLSTGAIA (275 aa)). Residues N42, N63, N121, N139, N191, N219, N282, and N293 are each glycosylated (N-linked (GlcNAc...) asparagine). The helical transmembrane segment at 305–325 (GIVIGCVVFVALIGFGGYLIW) threads the bilayer. Topologically, residues 326–656 (KKLMREEEEE…AAADSTAAHA (331 aa)) are cytoplasmic. A Protein kinase domain is found at 361 to 639 (FSNDRLLGSG…LLGSPQEDLL (279 aa)). ATP contacts are provided by residues 367 to 375 (LGSGGFGKV) and K389. D485 (proton acceptor) is an active-site residue.

The protein in the C-terminal section; belongs to the protein kinase superfamily. Ser/Thr protein kinase family. This sequence in the N-terminal section; belongs to the leguminous lectin family.

It localises to the cell membrane. The enzyme catalyses L-seryl-[protein] + ATP = O-phospho-L-seryl-[protein] + ADP + H(+). It catalyses the reaction L-threonyl-[protein] + ATP = O-phospho-L-threonyl-[protein] + ADP + H(+). Functionally, involved in resistance response to the pathogenic oomycetes Phytophthora infestans and Phytophthora capsici and to the pathogenic bacteria Pseudomonas syringae. The polypeptide is L-type lectin-domain containing receptor kinase S.1 (Arabidopsis thaliana (Mouse-ear cress)).